The chain runs to 308 residues: SAP30-binding protein (308 aa).

The interval 15-101 (AEDSEPESDG…EAEKRDPQEL (87 aa)) is disordered. The segment covering 16 to 26 (EDSEPESDGEA) has biased composition (acidic residues). Phosphoserine occurs at positions 18, 22, 43, and 52. The span at 57–78 (DEDGYEEEEDENSRQSEDDDSE) shows a compositional bias: acidic residues. Residues 79-99 (TEKPEADDPKDNTEAEKRDPQ) show a composition bias toward basic and acidic residues. A Glycyl lysine isopeptide (Lys-Gly) (interchain with G-Cter in SUMO2) cross-link involves residue Lys-95. Residue Ser-113 is modified to Phosphoserine. Glycyl lysine isopeptide (Lys-Gly) (interchain with G-Cter in SUMO2) cross-links involve residues Lys-220, Lys-304, and Lys-305.

It belongs to the HCNGP family. In terms of assembly, interacts with histone deacetylase complex subunit SAP30.

It is found in the nucleus. Plays a role in transcriptional repression by promoting histone deacetylase activity, leading to deacetylation of histone H3. May be involved in the regulation of beta-2-microglobulin genes. Its function is as follows. (Microbial infection) Involved in transcriptional repression of HHV-1 genes TK and gC. This is SAP30-binding protein from Homo sapiens (Human).